The primary structure comprises 441 residues: UBX domain-containing protein 6 (441 aa).

Positions 1–10 (MKKFFQEIKA) are mediates interaction with LMAN1. 3 disordered regions span residues 12-57 (IKFK…MAAA), 62-81 (RLEQ…SIRN), and 86-113 (ELRA…EEGS). Residues 27–36 (VGEKAPKEKP) are compositionally biased toward basic and acidic residues. Residues 51–63 (EAQMAAAAALARL) form a VCP/p97-interacting motif (VIM) region. Residues 175–244 (VDTIAKYLDN…GPEEFYVLSE (70 aa)) enclose the PUB domain. The UBX domain occupies 332-408 (RKYTYTLLRV…GLVPSALLTF (77 aa)).

Interacts with VCP through the PUB domain (via C-terminus) and VIM motif (via N-terminus); the interaction is direct. Forms a ternary complex with CAV1 and VCP. Interacts with SYVN1. Interacts with HERPUD1. Interacts with VCPKMT. May interact with DERL1. Interacts with PLAA, VCP and YOD1; may form a complex involved in macroautophagy. Interacts with LMAN1.

Its subcellular location is the cytoplasm. The protein resides in the cytosol. The protein localises to the membrane. It is found in the nucleus. It localises to the cytoskeleton. Its subcellular location is the microtubule organizing center. The protein resides in the centrosome. The protein localises to the early endosome membrane. It is found in the late endosome membrane. It localises to the lysosome membrane. Functionally, may negatively regulate the ATPase activity of VCP, an ATP-driven segregase that associates with different cofactors to control a wide variety of cellular processes. As a cofactor of VCP, it may play a role in the transport of CAV1 to lysosomes for degradation. It may also play a role in endoplasmic reticulum-associated degradation (ERAD) of misfolded proteins. Together with VCP and other cofactors, it may play a role in macroautophagy, regulating for instance the clearance of damaged lysosomes. The sequence is that of UBX domain-containing protein 6 from Bos taurus (Bovine).